A 396-amino-acid polypeptide reads, in one-letter code: Acetate kinase (396 aa).

A Mg(2+)-binding site is contributed by Asn8. ATP is bound at residue Lys15. Arg89 is a substrate binding site. The active-site Proton donor/acceptor is Asp146. ATP is bound by residues 206–210, 283–285, and 331–335; these read HIGNG, DMR, and GVGEN. Glu383 serves as a coordination point for Mg(2+).

This sequence belongs to the acetokinase family. As to quaternary structure, homodimer. It depends on Mg(2+) as a cofactor. Requires Mn(2+) as cofactor.

It localises to the cytoplasm. The catalysed reaction is acetate + ATP = acetyl phosphate + ADP. Its pathway is metabolic intermediate biosynthesis; acetyl-CoA biosynthesis; acetyl-CoA from acetate: step 1/2. In terms of biological role, catalyzes the formation of acetyl phosphate from acetate and ATP. Can also catalyze the reverse reaction. This chain is Acetate kinase, found in Streptococcus pneumoniae (strain Hungary19A-6).